Consider the following 174-residue polypeptide: Co-chaperone protein HscB homolog (174 aa).

In terms of domain architecture, J spans 2–74 (NYFELFKFSP…IRRAEHMLSL (73 aa)).

The protein belongs to the HscB family. Interacts with HscA and stimulates its ATPase activity.

In terms of biological role, co-chaperone involved in the maturation of iron-sulfur cluster-containing proteins. Seems to help targeting proteins to be folded toward HscA. In Shewanella baltica (strain OS223), this protein is Co-chaperone protein HscB homolog.